Consider the following 383-residue polypeptide: ERCC4 domain-containing protein EP364R (383 aa).

Residues F3 to A101 enclose the ERCC4 domain. The interval L336–T367 is disordered. The span at A347–S356 shows a compositional bias: basic and acidic residues. Residues D357–T367 show a composition bias toward polar residues.

This sequence belongs to the asfivirus EP364R family.

Functionally, plays a role in the inhibition of type I interferon signaling pathway. Mechanistically, specifically interacts with 2',3'-cGAMP and cleaves it via its phosphodiesterase activity. In turn, prevents 2',3'-cGAMP interaction with host ER-resident STING1 leading to inhibition of downstream signaling pathway and type I interferon production. The polypeptide is ERCC4 domain-containing protein EP364R (Ornithodoros (relapsing fever ticks)).